The primary structure comprises 241 residues: N-(5'-phosphoribosyl)anthranilate isomerase (241 aa).

Belongs to the TrpF family.

It carries out the reaction N-(5-phospho-beta-D-ribosyl)anthranilate = 1-(2-carboxyphenylamino)-1-deoxy-D-ribulose 5-phosphate. It participates in amino-acid biosynthesis; L-tryptophan biosynthesis; L-tryptophan from chorismate: step 3/5. The polypeptide is N-(5'-phosphoribosyl)anthranilate isomerase (trpF) (Methanothermobacter thermautotrophicus (strain ATCC 29096 / DSM 1053 / JCM 10044 / NBRC 100330 / Delta H) (Methanobacterium thermoautotrophicum)).